The sequence spans 170 residues: Disulfide bond formation protein B 1 (170 aa).

The Cytoplasmic segment spans residues 1 to 14 (MNDYTLAIRRERRL). The helical transmembrane segment at 15–31 (LMLLGWVCIALLAGALY) threads the bilayer. Residues 32-49 (LQYVKNEDPCPLCIIQRY) lie on the Periplasmic side of the membrane. Cysteine 41 and cysteine 44 are disulfide-bonded. Residues 50–64 (FFCAIGIFAFLAAGI) form a helical membrane-spanning segment. Residues 65-71 (RNWRGVW) lie on the Cytoplasmic side of the membrane. The chain crosses the membrane as a helical span at residues 72–89 (VLELLIAIAAAGGVGTAA). Topologically, residues 90 to 144 (RHLTIQMNPGFSCGFDTLQPIVDSLPPAQWFPGMFKVAGLCETVYPPIFGILLPG) are periplasmic. Cysteine 102 and cysteine 130 are oxidised to a cystine. The chain crosses the membrane as a helical span at residues 145–163 (WSLIGFAVILIAVVASLWR). Residues 164 to 170 (HRRKLVG) lie on the Cytoplasmic side of the membrane.

Belongs to the DsbB family.

It localises to the cell inner membrane. Functionally, required for disulfide bond formation in some periplasmic proteins. Acts by oxidizing the DsbA protein. The sequence is that of Disulfide bond formation protein B 1 from Burkholderia lata (strain ATCC 17760 / DSM 23089 / LMG 22485 / NCIMB 9086 / R18194 / 383).